A 429-amino-acid chain; its full sequence is Histidine--tRNA ligase (429 aa).

It belongs to the class-II aminoacyl-tRNA synthetase family. As to quaternary structure, homodimer.

It localises to the cytoplasm. It catalyses the reaction tRNA(His) + L-histidine + ATP = L-histidyl-tRNA(His) + AMP + diphosphate + H(+). The protein is Histidine--tRNA ligase of Pseudomonas aeruginosa (strain LESB58).